The following is a 164-amino-acid chain: Pyruvoyl-dependent arginine decarboxylase (164 aa).

Ser52 carries the pyruvic acid (Ser) modification.

The protein belongs to the PdaD family. The cofactor is pyruvate.

The enzyme catalyses L-arginine + H(+) = agmatine + CO2. The polypeptide is Pyruvoyl-dependent arginine decarboxylase (Methanococcus vannielii (strain ATCC 35089 / DSM 1224 / JCM 13029 / OCM 148 / SB)).